Consider the following 163-residue polypeptide: Nucleotide-binding protein Dhaf_3127 (163 aa).

Belongs to the YajQ family.

Nucleotide-binding protein. The sequence is that of Nucleotide-binding protein Dhaf_3127 from Desulfitobacterium hafniense (strain DSM 10664 / DCB-2).